Reading from the N-terminus, the 176-residue chain is Nucleoside triphosphate/diphosphate phosphatase (176 aa).

The active-site Proton donor is the Arg-23. The Mg(2+) site is built by Asn-87, Asp-103, Asp-105, Asp-107, Asp-120, and Glu-123.

Belongs to the Ntdp family. Requires Mg(2+) as cofactor.

The enzyme catalyses a ribonucleoside 5'-triphosphate + H2O = a ribonucleoside 5'-diphosphate + phosphate + H(+). It carries out the reaction a ribonucleoside 5'-diphosphate + H2O = a ribonucleoside 5'-phosphate + phosphate + H(+). Has nucleoside phosphatase activity towards nucleoside triphosphates and nucleoside diphosphates. The sequence is that of Nucleoside triphosphate/diphosphate phosphatase from Bacillus mycoides (strain KBAB4) (Bacillus weihenstephanensis).